A 209-amino-acid chain; its full sequence is Probable GTP-binding protein EngB (209 aa).

Residues 22–198 (TPLEIAFVGR…NRTVGSWLDA (177 aa)) enclose the EngB-type G domain. Mg(2+) contacts are provided by serine 37 and threonine 59.

The protein belongs to the TRAFAC class TrmE-Era-EngA-EngB-Septin-like GTPase superfamily. EngB GTPase family. It depends on Mg(2+) as a cofactor.

Its function is as follows. Necessary for normal cell division and for the maintenance of normal septation. The chain is Probable GTP-binding protein EngB from Neisseria meningitidis serogroup B (strain ATCC BAA-335 / MC58).